A 338-amino-acid chain; its full sequence is Glycerol-3-phosphate dehydrogenase [NAD(P)+] (338 aa).

The NADPH site is built by serine 14, tyrosine 15, histidine 35, and lysine 109. Positions 109, 138, and 140 each coordinate sn-glycerol 3-phosphate. Residue alanine 142 participates in NADPH binding. The sn-glycerol 3-phosphate site is built by lysine 194, aspartate 247, serine 257, arginine 258, and asparagine 259. Residue lysine 194 is the Proton acceptor of the active site. Arginine 258 is an NADPH binding site. NADPH is bound by residues valine 282 and glutamate 284.

It belongs to the NAD-dependent glycerol-3-phosphate dehydrogenase family.

It is found in the cytoplasm. The catalysed reaction is sn-glycerol 3-phosphate + NAD(+) = dihydroxyacetone phosphate + NADH + H(+). It catalyses the reaction sn-glycerol 3-phosphate + NADP(+) = dihydroxyacetone phosphate + NADPH + H(+). The protein operates within membrane lipid metabolism; glycerophospholipid metabolism. Catalyzes the reduction of the glycolytic intermediate dihydroxyacetone phosphate (DHAP) to sn-glycerol 3-phosphate (G3P), the key precursor for phospholipid synthesis. In Shewanella baltica (strain OS185), this protein is Glycerol-3-phosphate dehydrogenase [NAD(P)+].